A 605-amino-acid polypeptide reads, in one-letter code: Capsid scaffolding protein (605 aa).

Residues H48, S116, and H139 each act as charge relay system in the active site. The interval 235–274 (ASDAPDLQKPDKALQSPPPASTDPATMLSGNAGEGATACG) is disordered. An interaction with pAP region spans residues 281 to 300 (QDLISVPRNTFMTLLQTNLD). Disordered stretches follow at residues 403-431 (DYVP…FPGE) and 489-588 (PHQS…KSVS). Positions 410–416 (RSNKRKR) match the Nuclear localization signal motif. Residues 568–579 (ASASGVAQSKEP) are compositionally biased toward polar residues. An interaction with major capsid protein region spans residues 585-605 (KSVSAHLKSIFCEELLNKRVA).

The protein belongs to the herpesviridae capsid scaffolding protein family. Homomultimer. Interacts with major capsid protein. As to quaternary structure, exists in a monomer-dimer equilibrium with the dimer being the active species. In terms of processing, capsid scaffolding protein is cleaved by assemblin after formation of the spherical procapsid. As a result, the capsid obtains its mature, icosahedral shape. Cleavages occur at two or more sites: release (R-site) and maturation (M-site).

The protein resides in the host cytoplasm. It localises to the host nucleus. It catalyses the reaction Cleaves -Ala-|-Ser- and -Ala-|-Ala- bonds in the scaffold protein.. Functionally, acts as a scaffold protein by binding major capsid protein in the cytoplasm, inducing the nuclear localization of both proteins. Multimerizes in the nucleus such as major capsid protein forms the icosahedral T=16 capsid. Autocatalytic cleavage releases the assembly protein, and subsequently abolishes interaction with major capsid protein. Cleavages products are evicted from the capsid before or during DNA packaging. Protease that plays an essential role in virion assembly within the nucleus. Catalyzes the cleavage of the assembly protein after formation of the spherical procapsid. By that cleavage, the capsid matures and gains its icosahedral shape. The cleavage sites seem to include -Ala-Ser-, -Ala-Ala-, as well as Ala-Thr bonds. Assemblin and cleavages products are evicted from the capsid before or during DNA packaging. Its function is as follows. Plays a major role in capsid assembly. Acts as a scaffold protein by binding major capsid protein. Multimerizes in the nucleus such as major capsid protein forms the icosahedral T=16 capsid. Cleaved by assemblin after capsid completion. The cleavages products are evicted from the capsid before or during DNA packaging. This Homo sapiens (Human) protein is Capsid scaffolding protein.